Consider the following 541-residue polypeptide: Transmembrane protein 151 homolog (541 aa).

The next 3 membrane-spanning stretches (helical) occupy residues 27–47 (GYGKCLVCSLLLILCFFYATF), 73–93 (YNFVPIVFGLMLYIVYLMECW), and 254–274 (PWFLHPIVFWFFSIFVLSWPL). Residues 503–541 (ASISHSSSKDLKSLTLKSSSSNNNNNNSNNNNNDDPEHP) are disordered. Positions 515–535 (SLTLKSSSSNNNNNNSNNNNN) are enriched in low complexity.

This sequence belongs to the TMEM151 family.

The protein resides in the membrane. The polypeptide is Transmembrane protein 151 homolog (Caenorhabditis elegans).